Consider the following 505-residue polypeptide: Pentatricopeptide repeat-containing protein At2g17033 (505 aa).

3 PPR repeats span residues 243 to 277, 278 to 312, and 313 to 347; these read KTQA…KIKP, GLFE…GHKI, and DTVC…NVPF. Positions 413–503 constitute a Smr domain; it reads LDLHGMHLSS…AKGKTVKEWL (91 aa).

This sequence belongs to the PPR family. P subfamily.

This is Pentatricopeptide repeat-containing protein At2g17033 from Arabidopsis thaliana (Mouse-ear cress).